We begin with the raw amino-acid sequence, 76 residues long: uncharacterized protein (76 aa).

This is an uncharacterized protein from Methanocaldococcus jannaschii (strain ATCC 43067 / DSM 2661 / JAL-1 / JCM 10045 / NBRC 100440) (Methanococcus jannaschii).